The chain runs to 322 residues: uncharacterized protein (322 aa).

Residues 212 to 234 traverse the membrane as a helical segment; it reads VCALLVGAISVATAGAAFSIIIV.

The protein resides in the membrane. This is an uncharacterized protein from Rickettsia prowazekii (strain Madrid E).